Here is a 63-residue protein sequence, read N- to C-terminus: MSGSRLFFGVSTIVSIIFAILLPMAHAQSAAPAPAPTSDGTTIDQGIAYVLMLVALVLTYLIH.

The N-terminal stretch at 1-27 (MSGSRLFFGVSTIVSIIFAILLPMAHA) is a signal peptide. Position 28 is a pyrrolidone carboxylic acid (Gln-28). 3 positions are modified to 4-hydroxyproline: Pro-32, Pro-34, and Pro-36. O-linked (Ara...) hydroxyproline glycans are attached at residues Pro-32, Pro-34, and Pro-36. The GPI-anchor amidated serine moiety is linked to residue Ser-38. Residues 39-63 (DGTTIDQGIAYVLMLVALVLTYLIH) constitute a propeptide, removed in mature form.

This sequence belongs to the AG-peptide AGP family. In terms of processing, contains 4-hydroxyproline; hydroxylated on Pro-32, Pro-34 and Pro-36. O-glycosylated on hydroxyprolines; noncontiguous hydroxylproline residues are glycosylated with arabinogalactan.

It localises to the cell membrane. In terms of biological role, proteoglycan that seems to be implicated in diverse developmental roles such as differentiation, cell-cell recognition, embryogenesis and programmed cell death. The polypeptide is Arabinogalactan protein 41 (Arabidopsis thaliana (Mouse-ear cress)).